Reading from the N-terminus, the 166-residue chain is Protein-export protein SecB (166 aa).

The protein belongs to the SecB family. In terms of assembly, homotetramer, a dimer of dimers. One homotetramer interacts with 1 SecA dimer.

The protein localises to the cytoplasm. Functionally, one of the proteins required for the normal export of preproteins out of the cell cytoplasm. It is a molecular chaperone that binds to a subset of precursor proteins, maintaining them in a translocation-competent state. It also specifically binds to its receptor SecA. This chain is Protein-export protein SecB, found in Actinobacillus pleuropneumoniae serotype 5b (strain L20).